Reading from the N-terminus, the 154-residue chain is 3-hydroxyacyl-[acyl-carrier-protein] dehydratase FabZ (154 aa).

Residue H54 is part of the active site.

This sequence belongs to the thioester dehydratase family. FabZ subfamily.

Its subcellular location is the cytoplasm. The enzyme catalyses a (3R)-hydroxyacyl-[ACP] = a (2E)-enoyl-[ACP] + H2O. In terms of biological role, involved in unsaturated fatty acids biosynthesis. Catalyzes the dehydration of short chain beta-hydroxyacyl-ACPs and long chain saturated and unsaturated beta-hydroxyacyl-ACPs. This chain is 3-hydroxyacyl-[acyl-carrier-protein] dehydratase FabZ, found in Shewanella oneidensis (strain ATCC 700550 / JCM 31522 / CIP 106686 / LMG 19005 / NCIMB 14063 / MR-1).